Here is a 160-residue protein sequence, read N- to C-terminus: Cytochrome b6-f complex subunit 4 (160 aa).

The next 3 helical transmembrane spans lie at 36 to 56 (LLYI…GLAV), 95 to 115 (LLGV…PFLE), and 131 to 151 (TVFL…TLPI).

It belongs to the cytochrome b family. PetD subfamily. As to quaternary structure, the 4 large subunits of the cytochrome b6-f complex are cytochrome b6, subunit IV (17 kDa polypeptide, petD), cytochrome f and the Rieske protein, while the 4 small subunits are petG, petL, petM and petN. The complex functions as a dimer.

It localises to the plastid. The protein localises to the chloroplast thylakoid membrane. In terms of biological role, component of the cytochrome b6-f complex, which mediates electron transfer between photosystem II (PSII) and photosystem I (PSI), cyclic electron flow around PSI, and state transitions. In Gossypium barbadense (Sea Island cotton), this protein is Cytochrome b6-f complex subunit 4.